The sequence spans 534 residues: Zinc finger protein 69 homolog B (534 aa).

Residues lysine 37 and lysine 40 each participate in a glycyl lysine isopeptide (Lys-Gly) (interchain with G-Cter in SUMO2) cross-link. The region spanning 74-145 (LTFKDVSVDF…ERDISGVPSS (72 aa)) is the KRAB domain. Glycyl lysine isopeptide (Lys-Gly) (interchain with G-Cter in SUMO2) cross-links involve residues lysine 178 and lysine 235. 9 consecutive C2H2-type zinc fingers follow at residues 279–301 (FECN…MRIH), 307–329 (FRCK…QRIH), 335–357 (YECK…VRIH), 363–385 (YECR…LRTH), 391–413 (FTCK…EIIH), 419–441 (YICN…QRTH), 447–469 (YKCK…QRVH), 475–497 (YECS…QRIH), and 503–525 (YDCN…CKTH).

Belongs to the krueppel C2H2-type zinc-finger protein family.

The protein localises to the nucleus. In terms of biological role, may be involved in transcriptional regulation. Essential for Golgi structural integrity. The protein is Zinc finger protein 69 homolog B (ZFP69B) of Homo sapiens (Human).